The primary structure comprises 456 residues: Bifunctional protein GlmU (456 aa).

The segment at Met1–Arg229 is pyrophosphorylase. UDP-N-acetyl-alpha-D-glucosamine is bound by residues Leu11–Gly14, Lys25, Gln76, Gly81–Thr82, Tyr103–Asp105, Gly140, Glu154, Asn169, and Asn227. Asp105 lines the Mg(2+) pocket. Position 227 (Asn227) interacts with Mg(2+). The interval Leu230–Ser250 is linker. The segment at Gly251–Lys456 is N-acetyltransferase. UDP-N-acetyl-alpha-D-glucosamine is bound by residues Arg333 and Lys351. The active-site Proton acceptor is the His363. UDP-N-acetyl-alpha-D-glucosamine-binding residues include Tyr366 and Asn377. Residues Ala380, Asn386 to Tyr387, Ser405, Ala423, and Arg440 contribute to the acetyl-CoA site.

It in the N-terminal section; belongs to the N-acetylglucosamine-1-phosphate uridyltransferase family. The protein in the C-terminal section; belongs to the transferase hexapeptide repeat family. As to quaternary structure, homotrimer. Mg(2+) is required as a cofactor.

It is found in the cytoplasm. The catalysed reaction is alpha-D-glucosamine 1-phosphate + acetyl-CoA = N-acetyl-alpha-D-glucosamine 1-phosphate + CoA + H(+). It catalyses the reaction N-acetyl-alpha-D-glucosamine 1-phosphate + UTP + H(+) = UDP-N-acetyl-alpha-D-glucosamine + diphosphate. It participates in nucleotide-sugar biosynthesis; UDP-N-acetyl-alpha-D-glucosamine biosynthesis; N-acetyl-alpha-D-glucosamine 1-phosphate from alpha-D-glucosamine 6-phosphate (route II): step 2/2. The protein operates within nucleotide-sugar biosynthesis; UDP-N-acetyl-alpha-D-glucosamine biosynthesis; UDP-N-acetyl-alpha-D-glucosamine from N-acetyl-alpha-D-glucosamine 1-phosphate: step 1/1. Its pathway is bacterial outer membrane biogenesis; LPS lipid A biosynthesis. Functionally, catalyzes the last two sequential reactions in the de novo biosynthetic pathway for UDP-N-acetylglucosamine (UDP-GlcNAc). The C-terminal domain catalyzes the transfer of acetyl group from acetyl coenzyme A to glucosamine-1-phosphate (GlcN-1-P) to produce N-acetylglucosamine-1-phosphate (GlcNAc-1-P), which is converted into UDP-GlcNAc by the transfer of uridine 5-monophosphate (from uridine 5-triphosphate), a reaction catalyzed by the N-terminal domain. The chain is Bifunctional protein GlmU from Erwinia tasmaniensis (strain DSM 17950 / CFBP 7177 / CIP 109463 / NCPPB 4357 / Et1/99).